Reading from the N-terminus, the 75-residue chain is Translational regulator CsrA (75 aa).

This sequence belongs to the CsrA/RsmA family. Homodimer; the beta-strands of each monomer intercalate to form a hydrophobic core, while the alpha-helices form wings that extend away from the core. Interacts with FliW.

It is found in the cytoplasm. Its function is as follows. A translational regulator that binds mRNA to regulate translation initiation and/or mRNA stability. Usually binds in the 5'-UTR at or near the Shine-Dalgarno sequence preventing ribosome-binding, thus repressing translation. Its function is probably anatagonized by FliW. Inhibits translation of flaA mRNA in vitro. Involved in post-transcriptional regulation of flagellin biosynthesis. In Campylobacter jejuni subsp. jejuni serotype O:6 (strain 81116 / NCTC 11828), this protein is Translational regulator CsrA.